The sequence spans 550 residues: T-complex protein 1 subunit eta (550 aa).

The segment at 529–550 (SESANAGMMPPQGAGRGRGMPM) is disordered.

The protein belongs to the TCP-1 chaperonin family. Heterooligomeric complex of about 850 to 900 kDa that forms two stacked rings, 12 to 16 nm in diameter.

The protein resides in the cytoplasm. Functionally, molecular chaperone; assists the folding of proteins upon ATP hydrolysis. Known to play a role, in vitro, in the folding of actin and tubulin. In yeast may play a role in mitotic spindle formation. This Saccharomyces cerevisiae (strain ATCC 204508 / S288c) (Baker's yeast) protein is T-complex protein 1 subunit eta (CCT7).